The chain runs to 98 residues: NADH-ubiquinone oxidoreductase chain 4L (98 aa).

3 helical membrane-spanning segments follow: residues 1-21 (MSMV…GLLM), 29-49 (SLLC…ITIM), and 61-81 (IILL…LVMI).

The protein belongs to the complex I subunit 4L family. Core subunit of respiratory chain NADH dehydrogenase (Complex I) which is composed of 45 different subunits.

It is found in the mitochondrion inner membrane. It catalyses the reaction a ubiquinone + NADH + 5 H(+)(in) = a ubiquinol + NAD(+) + 4 H(+)(out). In terms of biological role, core subunit of the mitochondrial membrane respiratory chain NADH dehydrogenase (Complex I) which catalyzes electron transfer from NADH through the respiratory chain, using ubiquinone as an electron acceptor. Part of the enzyme membrane arm which is embedded in the lipid bilayer and involved in proton translocation. The sequence is that of NADH-ubiquinone oxidoreductase chain 4L (MT-ND4L) from Procyon lotor (Raccoon).